We begin with the raw amino-acid sequence, 226 residues long: ATP synthase subunit a (226 aa).

Transmembrane regions (helical) follow at residues 18 to 38, 76 to 96, 105 to 125, 134 to 154, 179 to 199, and 201 to 221; these read FITG…SLGA, YFPL…IGII, SWSF…FEGI, FAHF…IEII, LIML…VLFF, and GILQ…GAVL.

It belongs to the ATPase A chain family. In terms of assembly, F-type ATPases have 2 components, CF(1) - the catalytic core - and CF(0) - the membrane proton channel. CF(1) has five subunits: alpha(3), beta(3), gamma(1), delta(1), epsilon(1). CF(0) has three main subunits: a(1), b(2) and c(9-12). The alpha and beta chains form an alternating ring which encloses part of the gamma chain. CF(1) is attached to CF(0) by a central stalk formed by the gamma and epsilon chains, while a peripheral stalk is formed by the delta and b chains.

The protein localises to the cell inner membrane. In terms of biological role, key component of the proton channel; it plays a direct role in the translocation of protons across the membrane. This is ATP synthase subunit a from Helicobacter acinonychis (strain Sheeba).